Consider the following 611-residue polypeptide: ATP-dependent zinc metalloprotease FtsH (611 aa).

Position 1 (methionine 1) is a topological domain, cytoplasmic. Residues 2-22 (VKNLIFWLVITVVLMSIFQNF) form a helical membrane-spanning segment. The Extracellular segment spans residues 23–98 (NTNDVNNHKV…IGAIPEEPSL (76 aa)). Residues 99 to 119 (FISILISWFPMLLLIGVWIFF) form a helical membrane-spanning segment. Residues 120–611 (MRQMQMGGGK…KGWIETDTNK (492 aa)) are Cytoplasmic-facing. 192–199 (GPPGTGKT) contacts ATP. Histidine 414 lines the Zn(2+) pocket. Residue glutamate 415 is part of the active site. Residues histidine 418 and aspartate 492 each contribute to the Zn(2+) site.

This sequence in the central section; belongs to the AAA ATPase family. It in the C-terminal section; belongs to the peptidase M41 family. In terms of assembly, homohexamer. Requires Zn(2+) as cofactor.

It is found in the cell membrane. Acts as a processive, ATP-dependent zinc metallopeptidase for both cytoplasmic and membrane proteins. Plays a role in the quality control of integral membrane proteins. The chain is ATP-dependent zinc metalloprotease FtsH from Buchnera aphidicola subsp. Acyrthosiphon pisum (strain APS) (Acyrthosiphon pisum symbiotic bacterium).